Consider the following 330-residue polypeptide: Phosphate acyltransferase (330 aa).

Belongs to the PlsX family. In terms of assembly, homodimer. Probably interacts with PlsY.

The protein localises to the cytoplasm. It catalyses the reaction a fatty acyl-[ACP] + phosphate = an acyl phosphate + holo-[ACP]. It functions in the pathway lipid metabolism; phospholipid metabolism. Catalyzes the reversible formation of acyl-phosphate (acyl-PO(4)) from acyl-[acyl-carrier-protein] (acyl-ACP). This enzyme utilizes acyl-ACP as fatty acyl donor, but not acyl-CoA. The protein is Phosphate acyltransferase of Streptococcus pneumoniae (strain ATCC 700669 / Spain 23F-1).